Reading from the N-terminus, the 82-residue chain is Putative defensin-like protein 134 (82 aa).

The first 26 residues, 1–26, serve as a signal peptide directing secretion; it reads MEVRSLNLCFLLVLVLLMSPAPTAVA. 4 disulfide bridges follow: Cys32/Cys79, Cys42/Cys68, Cys47/Cys74, and Cys51/Cys76.

It belongs to the DEFL family.

It localises to the secreted. The chain is Putative defensin-like protein 134 from Arabidopsis thaliana (Mouse-ear cress).